The chain runs to 405 residues: Adenylosuccinate synthetase (405 aa).

Residues 12–18 (GDEGKGK) and 40–42 (GHT) each bind GTP. The active-site Proton acceptor is the Asp-13. Mg(2+)-binding residues include Asp-13 and Gly-40. IMP-binding positions include 13–16 (DEGK), 38–41 (NAGH), Thr-121, Arg-135, Gln-213, Thr-228, and Arg-297. His-41 serves as the catalytic Proton donor. Substrate is bound at residue 293-299 (TTTGRAR). GTP is bound by residues Arg-299, 325–327 (KMD), and 390–392 (SAG).

Belongs to the adenylosuccinate synthetase family. Homodimer. Mg(2+) is required as a cofactor.

The protein resides in the cytoplasm. The enzyme catalyses IMP + L-aspartate + GTP = N(6)-(1,2-dicarboxyethyl)-AMP + GDP + phosphate + 2 H(+). It functions in the pathway purine metabolism; AMP biosynthesis via de novo pathway; AMP from IMP: step 1/2. Its function is as follows. Plays an important role in the de novo pathway of purine nucleotide biosynthesis. Catalyzes the first committed step in the biosynthesis of AMP from IMP. The polypeptide is Adenylosuccinate synthetase (Deinococcus deserti (strain DSM 17065 / CIP 109153 / LMG 22923 / VCD115)).